A 65-amino-acid polypeptide reads, in one-letter code: Metallothionein-like protein type 3 (65 aa).

This sequence belongs to the metallothionein superfamily. Type 15 family.

Functionally, metallothioneins have a high content of cysteine residues that bind various heavy metals. This chain is Metallothionein-like protein type 3, found in Carica papaya (Papaya).